The primary structure comprises 77 residues: Small ribosomal subunit protein bS18 (77 aa).

Belongs to the bacterial ribosomal protein bS18 family. As to quaternary structure, part of the 30S ribosomal subunit. Forms a tight heterodimer with protein bS6.

Binds as a heterodimer with protein bS6 to the central domain of the 16S rRNA, where it helps stabilize the platform of the 30S subunit. The protein is Small ribosomal subunit protein bS18 of Shouchella clausii (strain KSM-K16) (Alkalihalobacillus clausii).